Reading from the N-terminus, the 379-residue chain is Probable leucine aminopeptidase ARB_01443 (379 aa).

The signal sequence occupies residues M1–A18. Positions 182 and 201 each coordinate Zn(2+). N-linked (GlcNAc...) asparagine glycosylation is found at N202 and N226. Zn(2+)-binding residues include E240 and D267. Cysteines 312 and 316 form a disulfide. H345 lines the Zn(2+) pocket.

Belongs to the peptidase M28 family. M28E subfamily. In terms of assembly, monomer. The cofactor is Zn(2+).

The protein resides in the secreted. Probable extracellular aminopeptidase which contributes to pathogenicity. The polypeptide is Probable leucine aminopeptidase ARB_01443 (Arthroderma benhamiae (strain ATCC MYA-4681 / CBS 112371) (Trichophyton mentagrophytes)).